Here is a 149-residue protein sequence, read N- to C-terminus: D-aminoacyl-tRNA deacylase (149 aa).

A Gly-cisPro motif, important for rejection of L-amino acids motif is present at residues 137–138 (GP).

This sequence belongs to the DTD family. As to quaternary structure, homodimer.

It localises to the cytoplasm. It carries out the reaction glycyl-tRNA(Ala) + H2O = tRNA(Ala) + glycine + H(+). The catalysed reaction is a D-aminoacyl-tRNA + H2O = a tRNA + a D-alpha-amino acid + H(+). An aminoacyl-tRNA editing enzyme that deacylates mischarged D-aminoacyl-tRNAs. Also deacylates mischarged glycyl-tRNA(Ala), protecting cells against glycine mischarging by AlaRS. Acts via tRNA-based rather than protein-based catalysis; rejects L-amino acids rather than detecting D-amino acids in the active site. By recycling D-aminoacyl-tRNA to D-amino acids and free tRNA molecules, this enzyme counteracts the toxicity associated with the formation of D-aminoacyl-tRNA entities in vivo and helps enforce protein L-homochirality. This chain is D-aminoacyl-tRNA deacylase, found in Thermoanaerobacter sp. (strain X514).